A 153-amino-acid polypeptide reads, in one-letter code: ATP synthase subunit b' (153 aa).

Residues 20–40 (TLPLMAVQVVLLTFILNALFF) form a helical membrane-spanning segment.

This sequence belongs to the ATPase B chain family. As to quaternary structure, F-type ATPases have 2 components, F(1) - the catalytic core - and F(0) - the membrane proton channel. F(1) has five subunits: alpha(3), beta(3), gamma(1), delta(1), epsilon(1). F(0) has four main subunits: a(1), b(1), b'(1) and c(10-14). The alpha and beta chains form an alternating ring which encloses part of the gamma chain. F(1) is attached to F(0) by a central stalk formed by the gamma and epsilon chains, while a peripheral stalk is formed by the delta, b and b' chains.

The protein localises to the cellular thylakoid membrane. Its function is as follows. F(1)F(0) ATP synthase produces ATP from ADP in the presence of a proton or sodium gradient. F-type ATPases consist of two structural domains, F(1) containing the extramembraneous catalytic core and F(0) containing the membrane proton channel, linked together by a central stalk and a peripheral stalk. During catalysis, ATP synthesis in the catalytic domain of F(1) is coupled via a rotary mechanism of the central stalk subunits to proton translocation. Functionally, component of the F(0) channel, it forms part of the peripheral stalk, linking F(1) to F(0). The b'-subunit is a diverged and duplicated form of b found in plants and photosynthetic bacteria. The protein is ATP synthase subunit b' of Prochlorococcus marinus (strain NATL1A).